The sequence spans 295 residues: Ribosomal RNA small subunit methyltransferase H (295 aa).

S-adenosyl-L-methionine-binding positions include 36 to 38, D56, L90, D104, and H111; that span reads GGH.

Belongs to the methyltransferase superfamily. RsmH family.

It is found in the cytoplasm. The catalysed reaction is cytidine(1402) in 16S rRNA + S-adenosyl-L-methionine = N(4)-methylcytidine(1402) in 16S rRNA + S-adenosyl-L-homocysteine + H(+). In terms of biological role, specifically methylates the N4 position of cytidine in position 1402 (C1402) of 16S rRNA. The sequence is that of Ribosomal RNA small subunit methyltransferase H from Dictyoglomus turgidum (strain DSM 6724 / Z-1310).